A 112-amino-acid chain; its full sequence is Protein FAM32A (112 aa).

Residues 23-56 (TKRKKKKKDKDKAKMLEAMGTSKKSEEEKRRCLD) are disordered. Positions 45–56 (KKSEEEKRRCLD) are enriched in basic and acidic residues.

This sequence belongs to the FAM32 family. In terms of tissue distribution, widely expressed, with highest level in pancreas and lowest in muscle.

It localises to the nucleus. Functionally, may induce G2 arrest and apoptosis. May also increase cell sensitivity to apoptotic stimuli. In cell lines, may play a role in the inhibition of anchor-independent cell growth. The sequence is that of Protein FAM32A (Fam32a) from Mus musculus (Mouse).